Consider the following 317-residue polypeptide: MNRFGTRLVGATATPPPPPKARSNENLDKIDMSLDDIIKLNRKEGKKQNFPRLNRRLQQSGTRQFRMRVRWGIQQNSGFGKTSLSRRGRVLPGKRRPYGVITGLAARKATGIRKGISPMNRPPLSDKNIERYFPALKRKTSLLRQNEVQRKQVAVLKRPNQLNRKNNIPANFTRNGNKLSHQKDTRQATFLFRRGLKVQTQLNTEQLIDDVVAKRTRQWRTSTTNGGILTVSIDNPGAVQCPVTQKPRLTRTAVPSFLTKREQSDVKKVPKGVPLQFDINSVGKQTGMTLNERFGILKEQRANLTFSKGGSRFVTVG.

Position 1 is an N-acetylmethionine (Met-1). Positions 1-26 (MNRFGTRLVGATATPPPPPKARSNEN) are disordered. Thr-14 is subject to Phosphothreonine. A Phosphoserine modification is found at Ser-23. The short motif at 26 to 44 (NLDKIDMSLDDIIKLNRKE) is the UAP56-binding motif element. Residues Ser-60 and Ser-117 each carry the phosphoserine modification. A Glycyl lysine isopeptide (Lys-Gly) (interchain with G-Cter in SUMO1) cross-link involves residue Lys-139. Lys-260 participates in a covalent cross-link: Glycyl lysine isopeptide (Lys-Gly) (interchain with G-Cter in SUMO2).

It belongs to the UIF family. In terms of assembly, interacts with DDX39B/UAP56 and NXF1; interaction with DDX39B/UAP56 and NXF1 are mutually exclusive. Interacts with SSRP1; required for its recruitment to mRNAs. Interacts with CHTOP.

The protein localises to the nucleus. The protein resides in the nucleoplasm. It localises to the nucleus speckle. Required for mRNA export from the nucleus to the cytoplasm. Acts as an adapter that uses the DDX39B/UAP56-NFX1 pathway to ensure efficient mRNA export and delivering to the nuclear pore. Associates with spliced and unspliced mRNAs simultaneously with ALYREF/THOC4. The protein is UAP56-interacting factor (Fyttd1) of Mus musculus (Mouse).